Consider the following 530-residue polypeptide: MARLFTPSESKYYLMALDAGTGSIRAVIFDLEGNQIAVGQAEWRHLAVPDVPGSMEFDLNKNWQLACECMRQALHNAGIAPEYIAAVSACSMREGIVLYNNEGTPIWACANVDARAAREVSELKELHNNTFENEVYRATGQTLALSAIPRLLWLAHHRSDIYRQASTITMISDWLAYMLSGELAVDPSNAGTTGLLDLTTRNWKPALLDMAGLRADILSPVKETGTLLGVVSSQAAELCGLKAGTPVVVGGGDVQLGCLGLGVVRPAQTAVLGGTFWQQVVNLAAPVTDPEMNVRVNPHVIPGMVQAESISFFTGLTMRWFRDAFCAEEKLIAERLGIDTYTLLEEMASRVPPGSWGVMPIFSDRMRFKTWYHAAPSFINLSIDPDKCNKATLFRALEENAAIVSACNLQQIADFSNIHPTSLVFAGGGSKGKLWSQILADVSGLPVNIPVVKEATALGCAIAAGVGAGIFSSMAETGERLVRWERTHTPDPEKHELYQDSRDKWQAVYQDQLGLVDHGLTTSLWKAPGL.

Belongs to the FGGY kinase family.

The protein localises to the cytoplasm. It carries out the reaction (S)-4,5-dihydroxypentane-2,3-dione + ATP = (2S)-2-hydroxy-3,4-dioxopentyl phosphate + ADP + H(+). Functionally, catalyzes the phosphorylation of autoinducer-2 (AI-2) to phospho-AI-2, which subsequently inactivates the transcriptional regulator LsrR and leads to the transcription of the lsr operon. Phosphorylates the ring-open form of (S)-4,5-dihydroxypentane-2,3-dione (DPD), which is the precursor to all AI-2 signaling molecules, at the C5 position. The polypeptide is Autoinducer-2 kinase (Escherichia coli (strain ATCC 8739 / DSM 1576 / NBRC 3972 / NCIMB 8545 / WDCM 00012 / Crooks)).